Consider the following 391-residue polypeptide: Phosphoprotein (391 aa).

Phosphothreonine occurs at positions 10 and 16. The span at glutamine 54–glutamine 65 shows a compositional bias: polar residues. 2 disordered regions span residues glutamine 54–phenylalanine 98 and proline 148–serine 184. Serine 69 bears the Phosphoserine mark. Phosphothreonine is present on residues threonine 91, threonine 150, and threonine 165. Serine 188 carries the post-translational modification Phosphoserine. Positions isoleucine 216–glycine 279 are multimerization. A coiled-coil region spans residues alanine 218–glutamine 245. The residue at position 250 (threonine 250) is a Phosphothreonine. The residue at position 257 (serine 257) is a Phosphoserine. Phosphothreonine is present on residues threonine 258 and threonine 282. Phosphoserine is present on residues serine 292 and serine 294. Phosphothreonine is present on threonine 298. Phosphoserine occurs at positions 301 and 374. Positions alanine 343–isoleucine 391 are interaction with the nucleoprotein. Phosphothreonine is present on threonine 375.

Belongs to the rubulavirus/avulavirus P protein family. As to quaternary structure, homotetramer. Interacts (via multimerization domain) with polymerase L; this interaction forms the polymerase L-P complex. Interacts (via N-terminus) with N0 (via Ncore); this interaction allows P to chaperon N0 to avoid N polymerization before encapsidation. Interacts (via C-terminus) with N-RNA template; this interaction positions the polymerase on the template for both transcription and replication. Interacts with host RPS6KB1 kinase; this interaction may play a role in the viral replication and transcription.

Functionally, essential cofactor of the RNA polymerase L that plays a central role in the transcription and replication by forming the polymerase complex with RNA polymerase L and recruiting L to the genomic N-RNA template for RNA synthesis. Also plays a central role in the encapsidation of nascent RNA chains by forming the encapsidation complex with the nucleocapsid protein N (N-P complex). Acts as a chaperone for newly synthesized free N protein, so-called N0, allowing encapsidation of nascent RNA chains during replication. The nucleoprotein protein N prevents excessive phosphorylation of P, which leads to down-regulation of viral transcription/ replication. Participates, together with N, in the formation of viral factories (viroplasms), which are large inclusions in the host cytoplasm where replication takes place. The chain is Phosphoprotein from Mumps virus (strain Enders) (MuV).